The primary structure comprises 270 residues: NAD(P)H-hydrate epimerase (270 aa).

A YjeF N-terminal domain is found at 25–234 (FQQLMDLMQN…DLLAPEAIYQ (210 aa)). (6S)-NADPHX is bound at residue 73–77 (DNGGQ). Residues asparagine 74 and aspartate 144 each contribute to the K(+) site. (6S)-NADPHX is bound by residues 148-154 (GVGLYGH) and glutamate 177. Threonine 180 provides a ligand contact to K(+).

This sequence belongs to the NnrE/AIBP family. Requires K(+) as cofactor.

It catalyses the reaction (6R)-NADHX = (6S)-NADHX. It carries out the reaction (6R)-NADPHX = (6S)-NADPHX. Catalyzes the epimerization of the S- and R-forms of NAD(P)HX, a damaged form of NAD(P)H that is a result of enzymatic or heat-dependent hydration. This is a prerequisite for the S-specific NAD(P)H-hydrate dehydratase to allow the repair of both epimers of NAD(P)HX. In Legionella pneumophila serogroup 1 (strain 2300/99 Alcoy), this protein is NAD(P)H-hydrate epimerase.